A 432-amino-acid chain; its full sequence is Succinate--CoA ligase [GDP-forming] subunit beta, mitochondrial (432 aa).

The transit peptide at 1–37 directs the protein to the mitochondrion; it reads MAAPVGAQARKLLRDLVLRPPLLAARSQVVQLTSRRW. Residues 46-274 form the ATP-grasp domain; it reads KKLMSDNGVK…NAEFRQKDIF (229 aa). Residue Gln57 participates in GTP binding. N6-acetyllysine is present on Lys73. At Lys78 the chain carries N6-succinyllysine. 90–92 is a binding site for GTP; sequence GRG. Lys111, Lys132, and Lys139 each carry N6-acetyllysine. Residue Leu146 participates in GTP binding. Ser161 carries the phosphoserine modification. Residues Lys200, Lys218, and Lys227 each carry the N6-acetyllysine modification. Mg(2+) is bound by residues Asn243 and Asp257. Lys271 carries the post-translational modification N6-acetyllysine. Position 308 (Asn308) interacts with substrate. Residue Lys338 is modified to N6-succinyllysine. N6-acetyllysine is present on Lys347. Residue 365-367 participates in substrate binding; it reads GIV. 2 positions are modified to N6-acetyllysine: Lys386 and Lys423.

It belongs to the succinate/malate CoA ligase beta subunit family. GTP-specific subunit beta subfamily. As to quaternary structure, heterodimer of an alpha and a beta subunit. The beta subunit determines specificity for GTP. Mg(2+) is required as a cofactor.

It is found in the mitochondrion. It carries out the reaction GTP + succinate + CoA = succinyl-CoA + GDP + phosphate. It functions in the pathway carbohydrate metabolism; tricarboxylic acid cycle; succinate from succinyl-CoA (ligase route): step 1/1. Functionally, GTP-specific succinyl-CoA synthetase functions in the citric acid cycle (TCA), coupling the hydrolysis of succinyl-CoA to the synthesis of GTP and thus represents the only step of substrate-level phosphorylation in the TCA. The beta subunit provides nucleotide specificity of the enzyme and binds the substrate succinate, while the binding sites for coenzyme A and phosphate are found in the alpha subunit. The chain is Succinate--CoA ligase [GDP-forming] subunit beta, mitochondrial from Bos taurus (Bovine).